Reading from the N-terminus, the 176-residue chain is MTTILSVRLKNKVVIGGDGQATLGNTIMKSNVKKIRTLYHEKVIAGFAGGTADAFTLFEMFEKKLAMYQGQLPRAAIELAKDWRSDRMLRKLEALLAVADKDTSLIITGNGDVIQPEDDLIAIGSGGSYAQSAARALINNTTLNADEIVEKSLNIAANICIYTNHSFTIKELFSEK.

T2 is an active-site residue. Positions 157, 160, and 163 each coordinate Na(+).

Belongs to the peptidase T1B family. HslV subfamily. A double ring-shaped homohexamer of HslV is capped on each side by a ring-shaped HslU homohexamer. The assembly of the HslU/HslV complex is dependent on binding of ATP.

The protein localises to the cytoplasm. It carries out the reaction ATP-dependent cleavage of peptide bonds with broad specificity.. Allosterically activated by HslU binding. Functionally, protease subunit of a proteasome-like degradation complex believed to be a general protein degrading machinery. This chain is ATP-dependent protease subunit HslV, found in Buchnera aphidicola subsp. Schizaphis graminum (strain Sg).